The chain runs to 275 residues: tRNA (guanine-N(7)-)-methyltransferase (275 aa).

The interval 1–73 (MRHHGRMHAR…GGQQDTWERL (73 aa)) is disordered. The segment covering 46–59 (AHRHRRVTSFRSRR) has biased composition (basic residues). Glutamate 107, glutamate 132, aspartate 159, and aspartate 182 together coordinate S-adenosyl-L-methionine. Aspartate 182 is a catalytic residue. Substrate-binding positions include lysine 186, aspartate 218, and 254 to 257 (TKYE).

The protein belongs to the class I-like SAM-binding methyltransferase superfamily. TrmB family.

It catalyses the reaction guanosine(46) in tRNA + S-adenosyl-L-methionine = N(7)-methylguanosine(46) in tRNA + S-adenosyl-L-homocysteine. The protein operates within tRNA modification; N(7)-methylguanine-tRNA biosynthesis. In terms of biological role, catalyzes the formation of N(7)-methylguanine at position 46 (m7G46) in tRNA. The protein is tRNA (guanine-N(7)-)-methyltransferase of Mycobacterium sp. (strain KMS).